Here is a 391-residue protein sequence, read N- to C-terminus: 2,4,6-trihydroxybenzophenone synthase (391 aa).

Cysteine 165 is a catalytic residue.

It belongs to the thiolase-like superfamily. Chalcone/stilbene synthases family. In terms of assembly, homodimer. Expressed in young fruit pericarp.

The enzyme catalyses benzoyl-CoA + 3 malonyl-CoA + 2 H(+) = 2,4,6-trihydroxybenzophenone + 3 CO2 + 4 CoA. Type III polyketide synthase involved in the biosynthesis of benzophenones and xanthones. Produces mainly 2,4,6-trihydroxybenzophenone together with minor amounts of tetraketide lactone, triketide lactone and diketide lactone. The preferred substrate is benzoyl-CoA, but can also use acetyl-CoA, phenylacetyl-CoA, hexanoyl-CoA, cinnamoyl-CoA, p-coumaroyl-CoA and salicoyl-CoA. The polypeptide is 2,4,6-trihydroxybenzophenone synthase (BPS) (Garcinia mangostana (Mangosteen)).